The sequence spans 541 residues: MAKTIAYDEEARRGLERGLNSLADAVKVTLGPKGRNVVLEKKWGAPTITNDGVSIAKEIELEDPYEKIGAELVKEVAKKTDDVAGDGTTTATVLAQALVREGLRNVAAGANPLGLKRGIEKAVEAVTAKLLDTAKEVETKEQIAATAGISAGDASIGELIAEAMDKVGKEGVITVEESNTFGLQLELTEGMRFDKGYISGYFVTDPERQEAVLEDPYILLVGSKVSTVKDLLPLLEKVIQAGKPLLIIAEDVEGEALSTLVVNKIRGTFKSVAVKAPGFGDRRKAQLADIAILTGGEVISEEVGLSLETAGIELLGQARKVVVTKDETTIVEGAGDAEAIKGRVAQIRTEIENSDSDYDREKLQERLAKLAGGVAVIKAGAATEVELKERKHRIEDAVRNAKAAVEEGIVAGGGVALLQAAPALDELKLTGDEATGANIVRVALSAPLKQIAFNAGLEPGVVAEKVSNLEAGHGLNADSGEYEDLLAAGVADPVKVTRSALQNAASIAALFLTTEAVVADKPEKAAAPAGDPTGGMGGMDF.

Residues 29 to 32, 86 to 90, Gly413, and Asp492 contribute to the ATP site; these read TLGP and DGTTT.

It belongs to the chaperonin (HSP60) family. In terms of assembly, forms a cylinder of 14 subunits composed of two heptameric rings stacked back-to-back. Interacts with the co-chaperonin GroES.

The protein localises to the cytoplasm. It catalyses the reaction ATP + H2O + a folded polypeptide = ADP + phosphate + an unfolded polypeptide.. Together with its co-chaperonin GroES, plays an essential role in assisting protein folding. The GroEL-GroES system forms a nano-cage that allows encapsulation of the non-native substrate proteins and provides a physical environment optimized to promote and accelerate protein folding. The sequence is that of Chaperonin GroEL 2 from Nocardia farcinica (strain IFM 10152).